Here is a 1033-residue protein sequence, read N- to C-terminus: NACHT, LRR and PYD domains-containing protein 3 (1033 aa).

The 91-residue stretch at Met1–Glu91 folds into the Pyrin domain. At Ser3 the chain carries Phosphoserine. Cys6 and Cys104 are disulfide-bonded. Phosphotyrosine is present on Tyr11. A lipid anchor (S-palmitoyl cysteine) is attached at Cys126. Residues Lys127–Lys130 form a required for binding to phosphatidylinositol 4-phosphate (PtdIns4P) region. 3 positions are modified to phosphotyrosine; by BTK: Tyr132, Tyr136, and Tyr145. One can recognise an FISNA domain in the interval Tyr136–Glu206. At Ser157 the chain carries Phosphoserine. Tyr164 bears the Phosphotyrosine; by BTK mark. Thr165 contributes to the ATP binding site. Ser194 is modified (phosphoserine; by MAPK8). Ser197 bears the Phosphoserine mark. The region spanning His216–Leu532 is the NACHT domain. ATP is bound at residue Gly222–Ile230. Ser261 carries the post-translational modification Phosphoserine. The residue at position 291 (Ser291) is a Phosphoserine; by PKD/PRKD1. A Glycyl lysine isopeptide (Lys-Gly) (interchain with G-Cter in ubiquitin) cross-link involves residue Lys320. Residue Ser330 is modified to Phosphoserine. Positions Leu351–Gln355 match the KFERQ-like motif 1 motif. Lys426 is covalently cross-linked (Glycyl lysine isopeptide (Lys-Gly) (interchain with G-Cter in ubiquitin)). Residue His518 participates in ATP binding. The short motif at Gln601 to Glu605 is the KFERQ-like motif 2 element. Residue Lys687 forms a Glycyl lysine isopeptide (Lys-Gly) (interchain with G-Cter in ubiquitin) linkage. Ser725 and Ser732 each carry phosphoserine. 5 LRR repeats span residues Ser739–Cys759, Asn768–Ser789, Lys796–Cys816, Asn825–Leu846, and Ser853–Cys873. A KFERQ-like motif 3 motif is present at residues Gln795–Glu799. Position 803 is a phosphoserine; by CSNK1A1 (Ser803). 3 S-palmitoyl cysteine lipidation sites follow: Cys834, Cys835, and Cys841. Position 858 is a phosphotyrosine (Tyr858). Residue Lys875 forms a Glycyl lysine isopeptide (Lys-Gly) (interchain with G-Cter in ubiquitin) linkage. LRR repeat units follow at residues Asn882–Ser903, Asn910–Cys930, Lys939–Thr960, and Ser967–Glu988. Cys955 carries S-palmitoyl cysteine lipidation. Lys970 participates in a covalent cross-link: Glycyl lysine isopeptide (Lys-Gly) (interchain with G-Cter in ubiquitin). Positions Glu988–Gln992 match the KFERQ-like motif 4 motif. A Phosphoserine modification is found at Ser1032.

The protein belongs to the NLRP family. Sensor component of NLRP3 inflammasomes; inflammasomes are supramolecular complexes that assemble in the cytosol in response to pathogens and other damage-associated signals and play critical roles in innate immunity and inflammation. The core of NLRP3 inflammasomes consists of a signal sensor component (NLRP3), an adapter (PYCARD/ASC), which recruits an effector pro-inflammatory caspase (CASP1 and, possibly, CASP4 and CASP5). Homodecamer; inactive NLRP3 forms homodecameric double-ring cages that hide pyrin domains within NACHT-LRR rings to avoid premature activation. Interacts (via pyrin domain) with PYCARD/ASC (via pyrin domain); interaction is direct. Interacts (via LRR repeat domain) with NEK7 (via N-terminus); the interaction is required for the formation of the complex NLRP3:PYCARD, oligomerization of PYCARD/ASC and activation of CASP1. Interacts (via LRR repeat domain) with NR4A1/Nur77 (via N-terminus); the interaction is direct, requires activation of NR4A1 by its ligands NBRE-containing dsDNA and lipopolysaccharide, and stimulates the association of NLRP3 with NEK7 for non-canonical NLRP3 inflammasome activation. Interacts with CARD8; leading to inhibit formation of the NLRP3 inflammasome. Interacts with MEFV; this interaction targets NLRP3 to degradation by autophagy, hence preventing excessive IL1B- and IL18-mediated inflammation. Interacts with EIF2AK2/PKR; this interaction requires EIF2AK2 activity, is accompanied by EIF2AK2 autophosphorylation and promotes inflammasome assembly in response to specific stimuli. Interacts with GBP5 (via DAPIN domain); this interaction promotes inflammasome assembly in response to microbial and soluble, but not crystalline, agents. Interacts with PML (isoform PML-1) (via the leucine-rich repeat (LRR) domain); PML-mediated increase in NLRP3 inflammasome activation does not depend upon this interaction. Interacts (via NACHT domain) with DHX33 (via DEAH box); NLRP3 activation in presence of cytosolic dsRNA is mediated by DHX33. Interacts (via NACHT and LRR domains) with ARRB2; this interaction is direct and inducible by polyunsaturated fatty acids (PUFAs). Interacts (via NACHT domain) with DDX3X under both LPS-primed and inflammasome-activating conditions. Interacts with IRF4 (via the LRR domain); this interaction is direct and is required for optimal IRF4 binding to IL4 promoter and efficient IL4 transactivation during differentiation of Th2 helper T-cells. Interacts with MAVS; promoting localization to mitochondria and activation of the NLRP3 inflammasome. Interacts with MARK4; promoting localization of NLRP3 to the microtubule organizing center (MTOC). Interacts with TRIM50; this interaction also promotes NLRP3 oligomerization and subsequent inflammasome activation. Interacts with IRGM; preventing NLRP3 inflammasome assembly and promoting NLRP3 degradation. Interacts (via KFERQ-like motifs) with HSPA8/HSC70; promoting NLRP3 degradation by the chaperone-mediated autophagy pathway. Interacts (via NACHT and LLR domains) with ABHD8; this interaction is enhanced in the presence of NLRP3 inflammasome inducers, such as ATP, nigericin, silica, or alum. Interaction with ABHD8 leads the recruitment of ZDHHC12, hence facilitating NLRP3 palmitoylation and degradation by the chaperone-mediated autophagy pathway (CMA), therefore attenuating NLRP3 inflammasome activation. Phosphorylation at Ser-194 by MAPK8/JNK1 increases inflammasome activation by promoting deubiquitination by BRCC3 and NLRP3 homooligomerization. Phosphorylation at Ser-803 by CSNK1A1 prevents inflammasome activation by preventing NEK7 recruitment. Phosphorylation at Ser-3 in the pyrin domain inhibits homomultimerization of NLRP3 and activation of the NLRP3 inflammasome: dephosphorylation by protein phosphatase 2A (PP2A) promotes assembly of the NLRP3 inflammasome. Phosphorylation at Ser-291 by PKD/PRKD1 promotes NLRP3 inflammasome assembly. Phosphorylation by ERK1/MAPK3 promotes NLRP3 inflammasome assembly. Phosphorylation by BTK (at Tyr-132, Tyr-136, Tyr-145 and Tyr-164) in the region that mediates binding to phosphatidylinositol phosphate, promotes relocalization of NLRP3 and assembly of the NLRP3 inflammasome. Phosphorylation at Tyr-858 inhibits NLRP3 inflammasome assembly: dephosphorylation by PTPN22 promotes inflammasome activation Phosphorylated by LATS1 and LATS2 at Ser-261 following palmitoylation by ZDHHC1, promoting its relocalization to the microtubule organizing center (MTOC), where NLRP3 is activated by NEK7, leading to inflammasome assembly and activation. Post-translationally, ubiquitinated; undergoes both 'Lys-48'- and 'Lys-63'-linked polyubiquitination. Ubiquitination does not lead to degradation, but inhibits inflammasome activation. Deubiquitination is catalyzed by BRCC3 and associated with NLRP3 activation and inflammasome assembly. This process can be induced by the activation of Toll-like receptors (by LPS), through a non-transcriptional pathway dependent on the mitochondrial production of reactive oxygen species, and by ATP. Ubiquitinated by TRIM31 via 'Lys-48'-linked ubiquitination, leading to its degradation by the proteasome. Ubiquitinated at Lys-687 by the SCF(FBXL2) complex, leading to its degradation by the proteasome. Ubiquitinated by TRIM35 via 'lys-48' and 'Lys-63'-linked ubiquitination leading to inhibition of NLRP3 inflammasome activation. Undergoes 'Lys-27'-linked polyubiquitination by MARCHF5, leading to NLRP3-NEK7 complex formation and NLRP3 oligomerization. In terms of processing, the disulfide bond in the pyrin domain might play a role in reactive oxygen species-mediated activation. Palmitoylation by ZDHHC12 promotes NLRP3 degradation by the chaperone-mediated autophagy pathway (CMA) and therefore limits NLRP3 inflammasome activation. Interaction with ZDHHC12, and hence NLRP3 palmitoylation, is enhanced by ABHD8. Following palmitoylation, HSPA8/HSC70 recognizes and binds the KFERQ-like motifs on NLRP3 and promotes NLRP3 recruitment to lysosomes, where it is degraded via the chaperone-mediated autophagy pathway in a LAMP2-dependent process. Palmitoylation at Cys-834 and Cys-835 by ZDHHC5 enhances its binding to NEK7 leading to inflammasome assembly and activation. Palmitoylation at Cys-126 and Cys-955 by ZDHHC1 facilitates phosphorylation at Ser-261 by LATS1 and LATS2, promoting its relocalization to the microtubule organizing center (MTOC), where NLRP3 is activated by NEK7, leading to inflammasome assembly and activation. Depalmitoylated by ABHD17A. Post-translationally, degraded via selective autophagy following interaction with Irgm1. Irgm1 promotes NLRP3 recruitment to autophagosome membranes, promoting its SQSTM1/p62-dependent autophagy-dependent degradation. As to expression, expressed with high levels in peripheral blood leukocytes, including Th2 lymphocytes and macrophages. Expressed at low levels in resting osteoblasts (at protein level).

The protein resides in the cytoplasm. The protein localises to the cytosol. Its subcellular location is the inflammasome. It localises to the cytoskeleton. It is found in the microtubule organizing center. The protein resides in the golgi apparatus membrane. The protein localises to the endoplasmic reticulum. Its subcellular location is the mitochondrion. It localises to the secreted. It is found in the nucleus. It carries out the reaction ATP + H2O = ADP + phosphate + H(+). Its activity is regulated as follows. Under resting conditions, NLRP3 binds ADP and is autoinhibited. Inactive NLRP3 forms homodecameric double-ring cages that hide pyrin domains within NACHT-LRR rings to avoid premature activation. NLRP3 activation stimuli include extracellular ATP, nigericin, reactive oxygen species, crystals of monosodium urate or cholesterol, amyloid-beta fibers, environmental or industrial particles and nanoparticles, such as asbestos, silica, aluminum salts, cytosolic dsRNA, etc. Almost all stimuli trigger intracellular K(+) efflux. These stimuli lead to membrane perturbations that induce activation of NLRP3. Upon activation, NLRP3 is transported to microtubule organizing center (MTOC), where it is unlocked by NEK7, leading to its relocalization to dispersed trans-Golgi network (dTGN) vesicle membranes and recruitment of PYCARD/ASC for the formation of an active inflammasome complex. NEK7-activated NLRP3 forms a disk-shaped inflammasome. NLRP3 and PYCARD/ASC interact via their respective pyrin domains; interaction initiates speck formation (nucleation) which greatly enhances further addition of soluble PYCARD/ASC molecules to the speck in a prion-like polymerization process. Clustered PYCARD/ASC nucleates the formation of CASP1 filaments through the interaction of their respective CARD domains, acting as a platform for CASP1 polymerization and activation. Active CASP1 then processes IL1B and IL18 precursors, leading to the release of mature cytokines in the extracellular milieu and inflammatory response. NLRP3 inflammasome assembly is inhibited by IRGM, which impedes NLRP3 oligomerization. NLRP3 inflammasome is inhibited by cyclic AMP (cAMP), which directly binds NLRP3; inhibition is relieved by calcium-sensing receptor CASR, which inhibits production of cAMP. Specifically inhibited by sulfonylurea MCC950 (also named CP-456,773, CRID3), a potent and specific small-molecule inhibitor of the NLRP3 inflammasome that acts by preventing ATP hydrolysis. Sensor component of the NLRP3 inflammasome, which mediates inflammasome activation in response to defects in membrane integrity, leading to secretion of inflammatory cytokines IL1B and IL18 and pyroptosis. In response to pathogens and other damage-associated signals that affect the integrity of membranes, initiates the formation of the inflammasome polymeric complex composed of NLRP3, CASP1 and PYCARD/ASC. Recruitment of pro-caspase-1 (proCASP1) to the NLRP3 inflammasome promotes caspase-1 (CASP1) activation, which subsequently cleaves and activates inflammatory cytokines IL1B and IL18 and gasdermin-D (GSDMD), promoting cytokine secretion and pyroptosis. Activation of NLRP3 inflammasome is also required for HMGB1 secretion; stimulating inflammatory responses. Under resting conditions, ADP-bound NLRP3 is autoinhibited. NLRP3 activation stimuli include extracellular ATP, nigericin, reactive oxygen species, crystals of monosodium urate or cholesterol, amyloid-beta fibers, environmental or industrial particles and nanoparticles, such as asbestos, silica, aluminum salts, cytosolic dsRNA, etc. Almost all stimuli trigger intracellular K(+) efflux. These stimuli lead to membrane perturbation and activation of NLRP3. Upon activation, NLRP3 is transported to microtubule organizing center (MTOC), where it is unlocked by NEK7, leading to its relocalization to dispersed trans-Golgi network (dTGN) vesicle membranes and formation of an active inflammasome complex. Associates with dTGN vesicle membranes by binding to phosphatidylinositol 4-phosphate (PtdIns4P). Shows ATPase activity. Its function is as follows. Independently of inflammasome activation, regulates the differentiation of T helper 2 (Th2) cells and has a role in Th2 cell-dependent asthma and tumor growth. During Th2 differentiation, required for optimal IRF4 binding to IL4 promoter and for IRF4-dependent IL4 transcription. Binds to the consensus DNA sequence 5'-GRRGGNRGAG-3'. May also participate in the transcription of IL5, IL13, GATA3, CCR3, CCR4 and MAF. The protein is NACHT, LRR and PYD domains-containing protein 3 of Mus musculus (Mouse).